Reading from the N-terminus, the 164-residue chain is MTGATALPYRSNVGAALFSRAGKILVARRADLGPDAAYQWQLPQGGIDGDEDPAAAVLRELDEEIGTTAVELLGEIPEWLSYDFPPDVVAKFGARHRGQRQRWFALRFLGTDDMIRLDAHAHPEFDEWRWTELSSIPALAVPFKRPIYERLARDFARFAKTDGA.

Residues 8–153 form the Nudix hydrolase domain; it reads PYRSNVGAAL…KRPIYERLAR (146 aa). The Nudix box motif lies at 45–66; it reads GGIDGDEDPAAAVLRELDEEIG.

The protein belongs to the Nudix hydrolase family. RppH subfamily. A divalent metal cation is required as a cofactor.

Accelerates the degradation of transcripts by removing pyrophosphate from the 5'-end of triphosphorylated RNA, leading to a more labile monophosphorylated state that can stimulate subsequent ribonuclease cleavage. This chain is RNA pyrophosphohydrolase, found in Acidiphilium cryptum (strain JF-5).